A 396-amino-acid polypeptide reads, in one-letter code: Putative nickel insertion protein (396 aa).

This sequence belongs to the LarC family.

In Methanococcoides burtonii (strain DSM 6242 / NBRC 107633 / OCM 468 / ACE-M), this protein is Putative nickel insertion protein.